Here is a 131-residue protein sequence, read N- to C-terminus: Transcription antitermination protein NusB (131 aa).

This sequence belongs to the NusB family.

Its function is as follows. Involved in transcription antitermination. Required for transcription of ribosomal RNA (rRNA) genes. Binds specifically to the boxA antiterminator sequence of the ribosomal RNA (rrn) operons. This chain is Transcription antitermination protein NusB, found in Ligilactobacillus salivarius (strain UCC118) (Lactobacillus salivarius).